The chain runs to 245 residues: Photosystem II protein PSBS1 (245 aa).

The N-terminal 25 residues, 1-25, are a transit peptide targeting the chloroplast; it reads MAMTLSTKAFAQRGVSARKNTVRVY. A run of 4 helical transmembrane segments spans residues 72-92, 108-128, 185-205, and 217-237; these read LFVG…EILT, GIEV…AAVL, LGFA…LAQF, and EFGL…EGSG.

This sequence belongs to the ELIP/psbS family.

Its subcellular location is the plastid. The protein resides in the chloroplast thylakoid membrane. Functionally, required for non-photochemical quenching (NPQ), a mechanism that converts and dissipates the harmful excess absorbed light energy into heat and protect the photosynthetic apparatus from photo-oxidative damage. Seems involved in the activation of NPQ, possibly by promoting conformational changes required for activation of LHCSR3-dependent quenching in the antenna of photosystem II (PSII). The protein is Photosystem II protein PSBS1 of Chlamydomonas reinhardtii (Chlamydomonas smithii).